Reading from the N-terminus, the 282-residue chain is HMG box-containing protein R545 (282 aa).

Positions 1-282 (MPKKTATKAN…KKEASDEESD (282 aa)) are disordered. Over residues 16–29 (DSENDSVVSEEEDN) the composition is skewed to acidic residues. Residues 70–87 (KGKVNAKKAPAKKAPVKK) show a composition bias toward basic residues. Acidic residues predominate over residues 93–121 (DSDNEEDEASEDGSDDEEDVVSADDSDSD). Residues 127–153 (KAAKKAPAKKAPAKKAPAKKAPAKKGK) show a composition bias toward basic residues. Composition is skewed to basic and acidic residues over residues 176 to 187 (TKKDGDKPKKPL) and 197 to 214 (RMPE…KEYM). Residues 183 to 252 (PKKPLSDYQK…KAPAKGGSKS (70 aa)) constitute a DNA-binding region (HMG box). The span at 253-273 (TAKKAPAKKAPAKKAPAKKSK) shows a compositional bias: basic residues.

The sequence is that of HMG box-containing protein R545 from Acanthamoeba polyphaga mimivirus (APMV).